Consider the following 385-residue polypeptide: S-adenosylmethionine synthase (385 aa).

Position 14 (His-14) interacts with ATP. A Mg(2+)-binding site is contributed by Asp-16. Glu-42 contributes to the K(+) binding site. 2 residues coordinate L-methionine: Glu-55 and Gln-98. Residues 98 to 108 (QSGDIAQAVDN) are flexible loop. ATP-binding positions include 165–167 (DAK), 232–233 (RF), Asp-241, 247–248 (RK), Ala-264, and Lys-268. Residue Asp-241 participates in L-methionine binding. Lys-272 contacts L-methionine.

Belongs to the AdoMet synthase family. In terms of assembly, homotetramer; dimer of dimers. Mg(2+) is required as a cofactor. K(+) serves as cofactor.

The protein resides in the cytoplasm. It carries out the reaction L-methionine + ATP + H2O = S-adenosyl-L-methionine + phosphate + diphosphate. The protein operates within amino-acid biosynthesis; S-adenosyl-L-methionine biosynthesis; S-adenosyl-L-methionine from L-methionine: step 1/1. Catalyzes the formation of S-adenosylmethionine (AdoMet) from methionine and ATP. The overall synthetic reaction is composed of two sequential steps, AdoMet formation and the subsequent tripolyphosphate hydrolysis which occurs prior to release of AdoMet from the enzyme. This Leuconostoc mesenteroides subsp. mesenteroides (strain ATCC 8293 / DSM 20343 / BCRC 11652 / CCM 1803 / JCM 6124 / NCDO 523 / NBRC 100496 / NCIMB 8023 / NCTC 12954 / NRRL B-1118 / 37Y) protein is S-adenosylmethionine synthase.